The primary structure comprises 377 residues: Lactosylceramide 1,3-N-acetyl-beta-D-glucosaminyltransferase (377 aa).

Over 1 to 12 (MLISARRLRRCQ) the chain is Cytoplasmic. Residues 13 to 30 (FFQLLTSCFVLSLMALLV) form a helical; Signal-anchor for type II membrane protein membrane-spanning segment. Residues 31–377 (QEDNSLINHV…DTYPCSAAWS (347 aa)) lie on the Lumenal side of the membrane. N-linked (GlcNAc...) asparagine glycosylation is found at Asn-56, Asn-167, and Asn-275.

Belongs to the glycosyltransferase 31 family.

It is found in the golgi apparatus membrane. The catalysed reaction is a beta-D-Gal-(1-&gt;4)-beta-D-Glc-(1&lt;-&gt;1)-Cer(d18:1(4E)) + UDP-N-acetyl-alpha-D-glucosamine = a beta-D-GlcNAc-(1-&gt;3)-beta-D-Gal-(1-&gt;4)-beta-D-Glc-(1&lt;-&gt;1)-Cer(d18:1(4E)) + UDP + H(+). It catalyses the reaction a neolactoside nLc4Cer(d18:1(4E)) + UDP-N-acetyl-alpha-D-glucosamine = a neolactoside IV(3)-beta-GlcNAc-nLc4Cer(d18:1(4E)) + UDP + H(+). It functions in the pathway protein modification; protein glycosylation. Its function is as follows. Beta-1,3-N-acetylglucosaminyltransferase that plays a key role in the synthesis of lacto- or neolacto-series carbohydrate chains on glycolipids. This is Lactosylceramide 1,3-N-acetyl-beta-D-glucosaminyltransferase (b3gnt5) from Xenopus tropicalis (Western clawed frog).